Here is a 102-residue protein sequence, read N- to C-terminus: Defensin (102 aa).

Positions 1-25 are cleaved as a signal peptide; the sequence is MKCATIVCTIAVVLAATLLNGSVQA. A propeptide spanning residues 26-62 is cleaved from the precursor; it reads APQEEAALSGGANLNTLLDELPEETHHAALENYRAKR. Cystine bridges form between Cys65-Cys92, Cys78-Cys98, and Cys82-Cys100.

This sequence belongs to the invertebrate defensin family. Type 1 subfamily.

It localises to the secreted. Functionally, responsible for the anti Gram-positive activity of immune hemolymph. This chain is Defensin (Def1), found in Anopheles gambiae (African malaria mosquito).